Reading from the N-terminus, the 1799-residue chain is Bromodomain and WD repeat-containing protein 3 (1799 aa).

WD repeat units follow at residues 170-209 (IKMH…IWAT), 213-251 (RLLA…VWCL), 255-297 (APVA…FWQW), 307-347 (RPVK…IYYL), 353-393 (EKIA…IWQY), 400-452 (SIVL…VWNS), 456-495 (QLLH…IWDL), and 502-542 (RNYF…LFGF). Residue serine 693 is modified to Phosphoserine. Residues 766–912 (KKPSYPIQRN…KKKKGGLVSM (147 aa)) are disordered. Positions 784 to 794 (SLRRTQRKRQH) are enriched in basic residues. Over residues 795 to 816 (TYLTRSNIEHNSQASSQTSGVQ) the composition is skewed to polar residues. A compositionally biased stretch (acidic residues) spans 817-828 (EDSDSSSEEDET). The span at 845–858 (SESSSSDSSSEYSD) shows a compositional bias: low complexity. Residues 875-884 (RQATQKIYSS) show a composition bias toward polar residues. Phosphoserine is present on residues serine 884 and serine 885. Basic residues predominate over residues 897–907 (KKPKQTKKKKG). In terms of domain architecture, Bromo 1 spans 1136–1243 (WGAHSRDEEC…DVLLRFIGDQ (108 aa)). 4 disordered regions span residues 1258–1291 (EDPD…KCRG), 1321–1366 (EPFR…IDTP), 1435–1482 (IQSQ…QNTS), and 1517–1723 (SPSS…AKRA). Positions 1260-1276 (PDSSDLEEDSEMVDLDS) are enriched in acidic residues. The Bromo 2 domain maps to 1298–1427 (CNPDAWKKQC…ALFENHIKNI (130 aa)). The segment covering 1333-1348 (PVQQQQEGESSQSVPP) has biased composition (low complexity). A compositionally biased stretch (basic residues) spans 1438 to 1450 (QKRRRPRYRKRLR). Low complexity-rich tracts occupy residues 1451–1463 (SSSS…RAPS) and 1517–1530 (SPSS…SGNS). Phosphoserine is present on residues serine 1574 and serine 1576. Over residues 1584 to 1596 (GEEKEMKETKEQV) the composition is skewed to basic and acidic residues. Low complexity predominate over residues 1598-1623 (LSSSESGELGSSLSSESTSGSDSDSE). Basic and acidic residues predominate over residues 1624–1640 (STSRTDQDYVDGDHDYS). Composition is skewed to basic residues over residues 1646 to 1663 (RPKR…RNWK) and 1681 to 1694 (RGGR…RGGR). Serine 1760 is modified (phosphoserine).

Its function is as follows. Plays a role in the regulation of cell morphology and cytoskeletal organization. Required in the control of cell shape. The sequence is that of Bromodomain and WD repeat-containing protein 3 (Brwd3) from Mus musculus (Mouse).